A 646-amino-acid chain; its full sequence is Preterminal protein (646 aa).

The Nuclear localization signal signature appears at 357-366; sequence RLPVRRRRRR. The residue at position 555 (S555) is an O-(5'-phospho-DNA)-serine. The tract at residues 619–646 is disordered; that stretch reads LHADVPLPPLQANPHPPLPPDARPQRTM. Pro residues predominate over residues 624-640; it reads PLPPLQANPHPPLPPDA.

The protein belongs to the adenoviridae terminal protein family. In terms of assembly, heterodimer with the polymerase; this heterodimer binds to bp 9 to 18 of the genome. Interacts with host POU2F1; POU2F1 binds to the auxiliary sequences in the inverted terminal repeats and tethers the pTP-POL heterodimer to the origin DNA thereby participating in the assembly of the pre-initiation complex (POL-TP-DBP-NFIA-POU2F1). Preterminal protein is used to replicate viral genome, upon genomic encapsidation it is processed first into iTP and finally into TP by adenovirus protease.

It is found in the host nucleus matrix. Functionally, protein covalently bound to the viral DNA that acts as a primer for viral genomic replication by DNA strand displacement. Assembles on the viral origin of replication in an initiation complex with viral polymerase, DBP, host NFIA and host POU2F1/OCT1. During initiation, the polymerase covalently couples the first dCTP with Ser-580 of pTP. The terminal protein stimulates the template activity over 20 fold compared to protein-free templates. Neo-synthesized viral genomes are linked to two preterminal proteins, one for each 5' end. These new genomes are encapsidated in the nucleus, and during capsid maturation by viral protease, preterminal protein is first cleaved into intermediary (iTP), then into mature TP. May play a role in host nuclear matrix localization of genomic DNA. The chain is Preterminal protein from Homo sapiens (Human).